Here is a 210-residue protein sequence, read N- to C-terminus: DNA-directed RNA polymerases I, II, and III subunit RPABC1 (210 aa).

An N-acetylmethionine modification is found at M1. A Glycyl lysine isopeptide (Lys-Gly) (interchain with G-Cter in SUMO2) cross-link involves residue K81.

It belongs to the archaeal Rpo5/eukaryotic RPB5 RNA polymerase subunit family. Component of the RNA polymerase I (Pol I), RNA polymerase II (Pol II) and RNA polymerase III (Pol III) complexes consisting of at least 13, 12 and 17 subunits, respectively. Pol I complex consists of a ten-subunit catalytic core composed of POLR1A/RPA1, POLR1B/RPA2, POLR1C/RPAC1, POLR1D/RPAC2, POLR1H/RPA12, POLR2E/RPABC1, POLR2F/RPABC2, POLR2H/RPABC3, POLR2K/RPABC4 and POLR2L/RPABC5; a mobile stalk subunit POLR1F/RPA43 protruding from the core and additional subunits homologous to general transcription factors POLR1E/RPA49 and POLR1G/RPA34. Part of Pol I pre-initiation complex (PIC), in which Pol I core assembles with RRN3 and promoter-bound UTBF and SL1/TIF-IB complex. Pol II complex contains a ten-subunit catalytic core composed of POLR2A/RPB1, POLR2B/RPB2, POLR2C/RPB3, POLR2I/RPB9, POLR2J/RPB11, POLR2E/RPABC1, POLR2F/RPABC2, POLR2H/RPABC3, POLR2K/RPABC4 and POLR2L/RPABC5 and a mobile stalk composed of two subunits POLR2D/RPB4 and POLR2G/RPB7. Part of Pol II(G) complex, in which Pol II core associates with an additional subunit POLR2M; unlike conventional Pol II, Pol II(G) functions as a transcriptional repressor. Part of TBP-based Pol II pre-initiation complex (PIC), in which Pol II core assembles with general transcription factors and other specific initiation factors including GTF2E1, GTF2E2, GTF2F1, GTF2F2, TCEA1, ERCC2, ERCC3, GTF2H2, GTF2H3, GTF2H4, GTF2H5, GTF2A1, GTF2A2, GTF2B and TBP; this large multi-subunit PIC complex mediates DNA unwinding and targets Pol II core to the transcription start site where the first phosphodiester bond forms. In Pol II complex, this subunit is present in 2-fold molar excess over the other subunits. Pol III complex consists of a ten-subunit catalytic core composed of POLR3A/RPC1, POLR3B/RPC2, POLR1C/RPAC1, POLR1D/RPAC2, POLR3K/RPC10, POLR2E/RPABC1, POLR2F/RPABC2, POLR2H/RPABC3, POLR2K/RPABC4 and POLR2L/RPABC5; a mobile stalk composed of two subunits POLR3H/RPC8 and CRCP/RPC9, protruding from the core and functioning primarily in transcription initiation; and additional subunits homologous to general transcription factors of the RNA polymerase II machinery, POLR3C/RPC3-POLR3F/RPC6-POLR3G/RPC7 heterotrimer required for transcription initiation and POLR3D/RPC4-POLR3E/RPC5 heterodimer involved in both transcription initiation and termination. Component of the PAQosome complex which is responsible for the biogenesis of several protein complexes and which consists of R2TP complex members RUVBL1, RUVBL2, RPAP3 and PIH1D1, URI complex members PFDN2, PFDN6, PDRG1, UXT and URI1 as well as ASDURF, POLR2E and DNAAF10/WDR92. Interacts with URI1.

The protein resides in the nucleus. Its subcellular location is the nucleolus. In terms of biological role, DNA-dependent RNA polymerase catalyzes the transcription of DNA into RNA using the four ribonucleoside triphosphates as substrates. Common component of RNA polymerases I, II and III which synthesize ribosomal RNA precursors, mRNA precursors and many functional non-coding RNAs, and small RNAs, such as 5S rRNA and tRNAs, respectively. Pol II is the central component of the basal RNA polymerase II transcription machinery. Pols are composed of mobile elements that move relative to each other. In Pol II, POLR2E/RPABC1 is part of the lower jaw surrounding the central large cleft and thought to grab the incoming DNA template. Seems to be the major component in this process. This chain is DNA-directed RNA polymerases I, II, and III subunit RPABC1, found in Mus musculus (Mouse).